The chain runs to 115 residues: Con-Ins T1A (115 aa).

The N-terminal stretch at 1–24 (MTTSFYFLLMALGLLLYVCQSSFG) is a signal peptide. The propeptide occupies 25 to 29 (NQHTR). Pro-34 carries the 4-hydroxyproline; partial modification. 3 disulfides stabilise this stretch: Cys-38/Cys-101, Cys-50/Cys-114, and Cys-100/Cys-105. A 4-carboxyglutamate modification is found at Glu-41. A propeptide spans 53-94 (KRNDAGKKRGRASPLWQRGGSLSMLKARAKRNEAFHLQRAHR) (c peptide). Glu-98 carries the post-translational modification 4-carboxyglutamate. A 4-hydroxyproline; partial modification is found at Pro-104. Glu-109 bears the 4-carboxyglutamate; partial mark. Cys-114 carries the post-translational modification Cysteine amide.

The protein belongs to the insulin family. As to quaternary structure, heterodimer of A and B chains; disulfide-linked. Expressed by the venom gland.

Its subcellular location is the secreted. This venom insulin, from a fish-hunting cone snail, facilitates prey capture by rapidly inducing hypoglycemic shock. It is one of the smallest known insulin found in nature and lacks the C-terminal segment of the B chain that, in human insulin, mediates engagement of the insulin receptor (INSR) and assembly of the hormone's hexameric storage form. Despite lacking this segment, it both binds and activates human insulin receptor (long isoform (HIR-B)) with a high potency (EC(50)=12.0 nM). In vivo, intraperitoneal injection of this peptide into zebrafish lowers blood glucose with a lower potency than human insulin. In addition, when applied to water, this peptide reduces overall locomotor activity of zebrafish larvae, observed as a significant decrease in the percentage of time spent swimming and movement frequency. When tested on a mouse model of diabetes, this insulin also lowers blood glucose with a 10-fold lower potency than human insulin. The chain is Con-Ins T1A from Conus tulipa (Fish-hunting cone snail).